The sequence spans 58 residues: MSTIKIKQVKSRIGAPADQKRTLDALGLRKLNRVVEHESTSSILGMVDKVKHLVAIVK.

It belongs to the universal ribosomal protein uL30 family. Part of the 50S ribosomal subunit.

This chain is Large ribosomal subunit protein uL30, found in Bacteroides thetaiotaomicron (strain ATCC 29148 / DSM 2079 / JCM 5827 / CCUG 10774 / NCTC 10582 / VPI-5482 / E50).